We begin with the raw amino-acid sequence, 425 residues long: Protein PTI1 (425 aa).

S272 carries the phosphoserine modification.

As to quaternary structure, component of the cleavage and polyadenylation factor (CPF) complex, which is composed of PTI1, SYC1, SSU72, GLC7, MPE1, REF2, PFS2, PTA1, YSH1/BRR5, SWD2, CFT2/YDH1, YTH1, CFT1/YHH1, FIP1 and PAP1. Component of the APT complex, which is a subcomplex of CPF, and is composed of PTI1, SYC1, SSU72, GLC7, REF2, PTA1 and SWD2.

The protein resides in the nucleus. Component of the cleavage and polyadenylation factor (CPF) complex, which plays a key role in polyadenylation-dependent pre-mRNA 3'-end formation and cooperates with cleavage factors including the CFIA complex and NAB4/CFIB. Component of the APT complex, which may be involved in polyadenylation-independent transcript 3'-end formation. PTI1 is required for 3'-end formation of snoRNAs. In Saccharomyces cerevisiae (strain ATCC 204508 / S288c) (Baker's yeast), this protein is Protein PTI1 (PTI1).